Consider the following 251-residue polypeptide: uncharacterized protein (251 aa).

Residues 229–251 (TSTETSPEHQADLKDDNSDISST) are disordered. Basic and acidic residues predominate over residues 234-245 (SPEHQADLKDDN).

This is an uncharacterized protein from Acanthamoeba polyphaga (Amoeba).